Consider the following 381-residue polypeptide: Alcohol dehydrogenase class-3 (381 aa).

Position 49 (Cys49) interacts with Zn(2+). An NAD(+)-binding site is contributed by His50. An alcohol is bound by residues Thr51 and His71. Residues His71, Glu72, Cys101, Cys104, Cys107, Cys115, and Cys179 each contribute to the Zn(2+) site. NAD(+) contacts are provided by residues 204 to 209 (GLGTVG), Asp228, Lys233, Ile274, 297 to 299 (VGV), 322 to 324 (TAF), and Arg374.

This sequence belongs to the zinc-containing alcohol dehydrogenase family. Class-III subfamily. As to quaternary structure, homodimer. The cofactor is Zn(2+).

The protein resides in the cytoplasm. The catalysed reaction is a primary alcohol + NAD(+) = an aldehyde + NADH + H(+). It catalyses the reaction a secondary alcohol + NAD(+) = a ketone + NADH + H(+). The enzyme catalyses S-(hydroxymethyl)glutathione + NADP(+) = S-formylglutathione + NADPH + H(+). It carries out the reaction S-(hydroxymethyl)glutathione + NAD(+) = S-formylglutathione + NADH + H(+). This Oryza sativa subsp. japonica (Rice) protein is Alcohol dehydrogenase class-3.